A 368-amino-acid polypeptide reads, in one-letter code: 2-aminoethylphosphonate--pyruvate transaminase (368 aa).

N6-(pyridoxal phosphate)lysine is present on lysine 192.

It belongs to the class-V pyridoxal-phosphate-dependent aminotransferase family. PhnW subfamily. Homodimer. It depends on pyridoxal 5'-phosphate as a cofactor.

The enzyme catalyses (2-aminoethyl)phosphonate + pyruvate = phosphonoacetaldehyde + L-alanine. Its function is as follows. Involved in phosphonate degradation. The protein is 2-aminoethylphosphonate--pyruvate transaminase of Pseudomonas entomophila (strain L48).